A 91-amino-acid polypeptide reads, in one-letter code: Putative pterin-4-alpha-carbinolamine dehydratase (91 aa).

Belongs to the pterin-4-alpha-carbinolamine dehydratase family.

It carries out the reaction (4aS,6R)-4a-hydroxy-L-erythro-5,6,7,8-tetrahydrobiopterin = (6R)-L-erythro-6,7-dihydrobiopterin + H2O. The chain is Putative pterin-4-alpha-carbinolamine dehydratase from Sulfolobus acidocaldarius (strain ATCC 33909 / DSM 639 / JCM 8929 / NBRC 15157 / NCIMB 11770).